A 132-amino-acid chain; its full sequence is D-beta-hydroxybutyrate dehydrogenase, mitochondrial (132 aa).

3–27 (LVTGCDSGFGFSLAKHLHSKGFLVF) is a binding site for NAD(+). The residue at position 17 (K17) is an N6-acetyllysine. S59 is a substrate binding site. The Proton acceptor role is filled by Y66. N6-acetyllysine is present on K70. O-linked (GlcNAc) serine glycosylation occurs at S77. At S104 the chain carries Phosphoserine.

This sequence belongs to the short-chain dehydrogenases/reductases (SDR) family. Homotetramer.

It is found in the mitochondrion inner membrane. It localises to the mitochondrion matrix. It catalyses the reaction (R)-3-hydroxybutanoate + NAD(+) = acetoacetate + NADH + H(+). With respect to regulation, requires phosphatidylcholine as an allosteric activator for enzymatic activity. The polypeptide is D-beta-hydroxybutyrate dehydrogenase, mitochondrial (Mesocricetus auratus (Golden hamster)).